A 205-amino-acid polypeptide reads, in one-letter code: Rho-related protein racI (205 aa).

12-19 (GDSKTGKT) serves as a coordination point for GTP. Residues 34 to 42 (YVPSHVDAT) carry the Effector region motif. GTP is bound by residues 59–63 (DSSAL) and 119–122 (TKCD). A Cysteine methyl ester modification is found at Cys202. Cys202 is lipidated: S-geranylgeranyl cysteine. Residues 203-205 (IIQ) constitute a propeptide, removed in mature form.

This sequence belongs to the small GTPase superfamily. Rho family.

The protein localises to the cell membrane. This is Rho-related protein racI (racI) from Dictyostelium discoideum (Social amoeba).